The primary structure comprises 153 residues: Small ribosomal subunit protein uS5 (153 aa).

In terms of domain architecture, S5 DRBM spans phenylalanine 15 to valine 78.

Belongs to the universal ribosomal protein uS5 family. In terms of assembly, part of the 30S ribosomal subunit. Contacts proteins S4 and S8.

Its function is as follows. With S4 and S12 plays an important role in translational accuracy. Functionally, located at the back of the 30S subunit body where it stabilizes the conformation of the head with respect to the body. The protein is Small ribosomal subunit protein uS5 of Helicobacter acinonychis (strain Sheeba).